The chain runs to 402 residues: Putative cytochrome P450 123 (402 aa).

C350 provides a ligand contact to heme.

It belongs to the cytochrome P450 family. The cofactor is heme.

The sequence is that of Putative cytochrome P450 123 (cyp123) from Mycobacterium bovis (strain ATCC BAA-935 / AF2122/97).